A 1964-amino-acid chain; its full sequence is MQPQLLLLLLLPLNFPVILTRELLCGGSPEPCANGGTCLRLSRGQGICQCAPGFLGETCQFPDPCRDTQLCKNGGSCQALLPTPPSSRSPTSPLTPHFSCTCPSGFTGDRCQTHLEELCPPSFCSNGGHCYVQASGRPQCSCEPGWTGEQCQLRDFCSANPCANGGVCLATYPQIQCRCPPGFEGHTCERDINECFLEPGPCPQGTSCHNTLGSYQCLCPVGQEGPQCKLRKGACPPGSCLNGGTCQLVPEGHSTFHLCLCPPGFTGLDCEMNPDDCVRHQCQNGATCLDGLDTYTCLCPKTWKGWDCSEDIDECEARGPPRCRNGGTCQNTAGSFHCVCVSGWGGAGCEENLDDCAAATCAPGSTCIDRVGSFSCLCPPGRTGLLCHLEDMCLSQPCHVNAQCSTNPLTGSTLCICQPGYSGSTCHQDLDECQMAQQGPSPCEHGGSCINTPGSFNCLCLPGYTGSRCEADHNECLSQPCHPGSTCLDLLATFHCLCPPGLEGRLCEVEVNECTSNPCLNQAACHDLLNGFQCLCLPGFTGARCEKDMDECSSTPCANGGRCRDQPGAFYCECLPGFEGPHCEKEVDECLSDPCPVGASCLDLPGAFFCLCRPGFTGQLCEVPLCTPNMCQPGQQCQGQEHRAPCLCPDGSPGCVPAEDNCPCHHGHCQRSLCVCDEGWTGPECETELGGCISTPCAHGGTCHPQPSGYNCTCPAGYMGLTCSEEVTACHSGPCLNGGSCSIRPEGYSCTCLPSHTGRHCQTAVDHCVSASCLNGGTCVNKPGTFFCLCATGFQGLHCEEKTNPSCADSPCRNKATCQDTPRGARCLCSPGYTGSSCQTLIDLCARKPCPHTARCLQSGPSFQCLCLQGWTGALCDFPLSCQKAAMSQGIEISGLCQNGGLCIDTGSSYFCRCPPGFQGKLCQDNVNPCEPNPCHHGSTCVPQPSGYVCQCAPGYEGQNCSKVLDACQSQPCHNHGTCTSRPGGFHCACPPGFVGLRCEGDVDECLDRPCHPSGTAACHSLANAFYCQCLPGHTGQRCEVEMDLCQSQPCSNGGSCEITTGPPPGFTCHCPKGFEGPTCSHKALSCGIHHCHNGGLCLPSPKPGSPPLCACLSGFGGPDCLTPPAPPGCGPPSPCLHNGTCTETPGLGNPGFQCTCPPDSPGPRCQRPGASGCEGRGGDGTCDAGCSGPGGDWDGGDCSLGVPDPWKGCPPHSQCWLLFRDGRCHPQCDSEECLFDGYDCEIPLTCIPAYDQYCRDHFHNGHCEKGCNNAECGWDGGDCRPEGEDSEGRPSLALLVVLRPPALDQQLLALARVLSLTLRVGLWVRKDSEGRNMVFPYPGTRAKEELSGARDSSSWERQAPPTQPLGKETESLGAGFVVVMGVDLSRCGPEHPASRCPWDSGLLLRFLAAMAAVGALEPLLPGPLLAAHPQAGTRPSANQLPWPILCSPVVGVLLLALGALLVLQLIRRRRREHGALWLPPGFIRRPQTQQAPHRRRPPLGEDNIGLKALKPEAEVDEDGVAMCSGPEEGEAEETASASRCQLWPLNSGCGELPQAAMLTPPQECESEVLDVDTCGPDGVTPLMSAVFCGGVQSTTGASPQRLGLGNLEPWEPLLDRGACPQAHTVGTGETPLHLAARFSRPTAARRLLEAGANPNQPDRAGRTPLHTAVAADAREVCQLLLASRQTTVDARTEDGTTPLMLAARLAVEDLVEELIAARADVGARDKRGKTALHWAAAVNNARAARSLLQAGADKDAQDSREQTPLFLAAREGAVEVAQLLLELGAARGLRDQAGLAPGDVARQRSHWDLLTLLEGAGPTTQEARAHARTTPGGGAAPRCRTLSAGARPRGGGACLQARTWSVDLGARGGKVYARCRSRSGSCGGPTTRGRRFSAGSRGRRGARASQDDWPRDWVALEACGSACSAPIPPPSLTPSPERGSPQVAWGLPVHQEIPLNSVVRNLN.

A signal peptide spans 1–20 (MQPQLLLLLLLPLNFPVILT). EGF-like domains follow at residues 21–60 (RELL…ETCQ), 61–112 (FPDP…DRCQ), 115–152 (LEEL…EQCQ), and 153–189 (LRDF…HTCE). Residues 21 to 1443 (RELLCGGSPE…TRPSANQLPW (1423 aa)) are Extracellular-facing. 95 disulfides stabilise this stretch: cysteine 25-cysteine 38, cysteine 32-cysteine 48, cysteine 50-cysteine 59, cysteine 65-cysteine 77, cysteine 71-cysteine 100, cysteine 102-cysteine 111, cysteine 119-cysteine 130, cysteine 124-cysteine 140, cysteine 142-cysteine 151, cysteine 157-cysteine 168, cysteine 162-cysteine 177, cysteine 179-cysteine 188, cysteine 195-cysteine 208, cysteine 202-cysteine 217, cysteine 219-cysteine 228, cysteine 235-cysteine 246, cysteine 240-cysteine 259, cysteine 261-cysteine 270, cysteine 277-cysteine 288, cysteine 282-cysteine 297, cysteine 299-cysteine 308, cysteine 315-cysteine 329, cysteine 323-cysteine 338, cysteine 340-cysteine 349, cysteine 356-cysteine 367, cysteine 361-cysteine 376, cysteine 378-cysteine 387, cysteine 393-cysteine 404, cysteine 398-cysteine 415, cysteine 417-cysteine 426, cysteine 433-cysteine 449, cysteine 443-cysteine 458, cysteine 460-cysteine 469, cysteine 476-cysteine 487, cysteine 481-cysteine 496, cysteine 498-cysteine 507, cysteine 514-cysteine 525, cysteine 519-cysteine 534, cysteine 536-cysteine 545, cysteine 552-cysteine 563, cysteine 557-cysteine 572, cysteine 574-cysteine 583, cysteine 590-cysteine 601, cysteine 595-cysteine 610, cysteine 612-cysteine 621, cysteine 626-cysteine 637, cysteine 631-cysteine 646, cysteine 648-cysteine 655, cysteine 662-cysteine 669, cysteine 664-cysteine 674, cysteine 676-cysteine 685, cysteine 692-cysteine 703, cysteine 697-cysteine 712, cysteine 714-cysteine 723, cysteine 730-cysteine 741, cysteine 735-cysteine 750, cysteine 752-cysteine 761, cysteine 768-cysteine 779, cysteine 773-cysteine 788, cysteine 790-cysteine 799, cysteine 807-cysteine 818, cysteine 812-cysteine 827, cysteine 829-cysteine 838, cysteine 845-cysteine 856, cysteine 850-cysteine 865, cysteine 867-cysteine 876, cysteine 882-cysteine 903, cysteine 897-cysteine 912, cysteine 914-cysteine 923, cysteine 930-cysteine 941, cysteine 935-cysteine 950, cysteine 952-cysteine 961, cysteine 968-cysteine 979, cysteine 973-cysteine 988, cysteine 990-cysteine 999, cysteine 1006-cysteine 1019, cysteine 1011-cysteine 1028, cysteine 1030-cysteine 1039, cysteine 1046-cysteine 1057, cysteine 1051-cysteine 1069, cysteine 1071-cysteine 1080, cysteine 1087-cysteine 1098, cysteine 1092-cysteine 1110, cysteine 1112-cysteine 1121, cysteine 1130-cysteine 1142, cysteine 1136-cysteine 1155, cysteine 1157-cysteine 1166, cysteine 1174-cysteine 1187, cysteine 1183-cysteine 1199, cysteine 1210-cysteine 1234, cysteine 1216-cysteine 1229, cysteine 1225-cysteine 1241, cysteine 1247-cysteine 1273, cysteine 1255-cysteine 1268, and cysteine 1264-cysteine 1280. The EGF-like 5; calcium-binding domain occupies 191–229 (DINECFLEPGPCPQGTSCHNTLGSYQCLCPVGQEGPQCK). Residues 231–271 (RKGACPPGSCLNGGTCQLVPEGHSTFHLCLCPPGFTGLDCE) form the EGF-like 6 domain. The EGF-like 7; calcium-binding domain occupies 273-309 (NPDDCVRHQCQNGATCLDGLDTYTCLCPKTWKGWDCS). Residues 311–350 (DIDECEARGPPRCRNGGTCQNTAGSFHCVCVSGWGGAGCE) form the EGF-like 8; calcium-binding domain. One can recognise an EGF-like 9; calcium-binding domain in the interval 352–388 (NLDDCAAATCAPGSTCIDRVGSFSCLCPPGRTGLLCH). Positions 389-427 (LEDMCLSQPCHVNAQCSTNPLTGSTLCICQPGYSGSTCH) constitute an EGF-like 10 domain. Residues 429-470 (DLDECQMAQQGPSPCEHGGSCINTPGSFNCLCLPGYTGSRCE) form the EGF-like 11; calcium-binding domain. The region spanning 472-508 (DHNECLSQPCHPGSTCLDLLATFHCLCPPGLEGRLCE) is the EGF-like 12; calcium-binding domain. The EGF-like 13; calcium-binding domain maps to 510–546 (EVNECTSNPCLNQAACHDLLNGFQCLCLPGFTGARCE). The EGF-like 14; calcium-binding domain occupies 548-584 (DMDECSSTPCANGGRCRDQPGAFYCECLPGFEGPHCE). The region spanning 586–622 (EVDECLSDPCPVGASCLDLPGAFFCLCRPGFTGQLCE) is the EGF-like 15; calcium-binding domain. EGF-like domains lie at 623–656 (VPLC…PGCV), 658–686 (AEDN…PECE), 688–724 (ELGG…LTCS), 726–762 (EVTA…RHCQ), 764–800 (AVDH…LHCE), 803–839 (TNPS…SSCQ), 841–877 (LIDL…ALCD), 878–924 (FPLS…KLCQ), 926–962 (NVNP…QNCS), 964–1000 (VLDA…LRCE), 1002–1040 (DVDE…QRCE), 1042–1081 (EMDL…PTCS), 1083–1122 (KALS…PDCL), and 1126–1167 (APPG…PRCQ). Residue asparagine 711 is glycosylated (N-linked (GlcNAc...) asparagine). The N-linked (GlcNAc...) asparagine glycan is linked to asparagine 960. N-linked (GlcNAc...) asparagine glycosylation occurs at asparagine 1139. LNR repeat units follow at residues 1166-1209 (CQRP…PWKG), 1210-1241 (CPPH…GYDC), and 1247-1287 (CIPA…GEDS). Positions 1345–1369 (EELSGARDSSSWERQAPPTQPLGKE) are disordered. Residues 1444 to 1464 (PILCSPVVGVLLLALGALLVL) form a helical membrane-spanning segment. Over 1465–1964 (QLIRRRRREH…PLNSVVRNLN (500 aa)) the chain is Cytoplasmic. Residues 1516–1535 (VDEDGVAMCSGPEEGEAEET) form a disordered region. ANK repeat units lie at residues 1628-1657 (TGET…NPNQ), 1661-1691 (AGRT…TVDA), 1695-1724 (DGTT…DVGA), 1728-1757 (RGKT…DKDA), and 1761-1790 (REQT…ARGL). The disordered stretch occupies residues 1879–1907 (RSGSCGGPTTRGRRFSAGSRGRRGARASQ).

The protein belongs to the NOTCH family. In terms of assembly, heterodimer of a C-terminal fragment N(TM) and a N-terminal fragment N(EC) which are probably linked by disulfide bonds. Interacts with MAML1, MAML2 and MAML3 which act as transcriptional coactivators for NOTCH4. Synthesized in the endoplasmic reticulum as an inactive form which is proteolytically cleaved by a furin-like convertase in the trans-Golgi network before it reaches the plasma membrane to yield an active, ligand-accessible form. Cleavage results in a C-terminal fragment N(TM) and a N-terminal fragment N(EC). Following ligand binding, it is cleaved by TNF-alpha converting enzyme (TACE) to yield a membrane-associated intermediate fragment called notch extracellular truncation (NEXT). This fragment is then cleaved by presenilin dependent gamma-secretase to release a notch-derived peptide containing the intracellular domain (NICD) from the membrane. Post-translationally, phosphorylated. Highly expressed in lung, moderately in heart kidney, and at lower levels in the ovary and skeletal muscle. A very low expression is seen in the brain, intestine, liver and testis.

The protein resides in the cell membrane. Its subcellular location is the nucleus. Its function is as follows. Functions as a receptor for membrane-bound ligands Jagged1, Jagged2 and Delta1 to regulate cell-fate determination. Upon ligand activation through the released notch intracellular domain (NICD) it forms a transcriptional activator complex with RBPJ/RBPSUH and activates genes of the enhancer of split locus. Affects the implementation of differentiation, proliferation and apoptotic programs. May regulate branching morphogenesis in the developing vascular system. This chain is Neurogenic locus notch homolog protein 4, found in Mus musculus (Mouse).